A 347-amino-acid chain; its full sequence is tRNA N6-adenosine threonylcarbamoyltransferase (347 aa).

Fe cation contacts are provided by H111 and H115. Residues 134–138 (LISGG), D167, G180, and N277 each bind substrate. Position 305 (D305) interacts with Fe cation.

The protein belongs to the KAE1 / TsaD family. Fe(2+) serves as cofactor.

Its subcellular location is the cytoplasm. The enzyme catalyses L-threonylcarbamoyladenylate + adenosine(37) in tRNA = N(6)-L-threonylcarbamoyladenosine(37) in tRNA + AMP + H(+). Its function is as follows. Required for the formation of a threonylcarbamoyl group on adenosine at position 37 (t(6)A37) in tRNAs that read codons beginning with adenine. Is involved in the transfer of the threonylcarbamoyl moiety of threonylcarbamoyl-AMP (TC-AMP) to the N6 group of A37, together with TsaE and TsaB. TsaD likely plays a direct catalytic role in this reaction. The sequence is that of tRNA N6-adenosine threonylcarbamoyltransferase from Actinobacillus pleuropneumoniae serotype 5b (strain L20).